Reading from the N-terminus, the 286-residue chain is Nucleoid occlusion protein (286 aa).

A DNA-binding region (H-T-H motif) is located at residues 147–166 (EALAQRLGKNQSTVANKLRL).

This sequence belongs to the ParB family.

Its subcellular location is the cytoplasm. It is found in the nucleoid. Effects nucleoid occlusion by binding relatively nonspecifically to DNA and preventing the assembly of the division machinery in the vicinity of the nucleoid, especially under conditions that disturb the cell cycle. It helps to coordinate cell division and chromosome segregation by preventing the formation of the Z ring through the nucleoid, which would cause chromosome breakage. The protein is Nucleoid occlusion protein of Oceanobacillus iheyensis (strain DSM 14371 / CIP 107618 / JCM 11309 / KCTC 3954 / HTE831).